Reading from the N-terminus, the 281-residue chain is MFPAQEEADRTVFVGNLEARVREEILYELFLQAGPLTKVTICKDREGKPKSFGFVCFKHPESVSYAIALLNGIRLYGRPINVQYRFGSSRSSEPANQSFESCVKINSHNYRNEEMLVGRSSFPMQYFPINNTSLPQEYFLFQKMQWHVYNPVLQLPYYEMTAPLPNSASVSSSLNHVPDLEAGPSSYKWTHQQPSDSDLYQMTAPLPNSASVSSSLNHVPDLEAGPSSYKWTHQQPSDSDLYQMNKRKRQKQTSDSDSSTDNNRGNECSQKFRKSKKKKRY.

An RRM domain is found at 10–87; sequence RTVFVGNLEA…RPINVQYRFG (78 aa). The segment at 184–281 is disordered; the sequence is PSSYKWTHQQ…FRKSKKKKRY (98 aa). Polar residues-rich tracts occupy residues 187–217 and 229–242; these read YKWT…SSLN and YKWT…SDLY. Residues 245–280 carry the Bipartite nuclear localization signal motif; sequence NKRKRQKQTSDSDSSTDNNRGNECSQKFRKSKKKKR. The span at 271-281 shows a compositional bias: basic residues; it reads KFRKSKKKKRY.

Homodimer. Expressed in brain, hippocampus, prefrontal cortex, cerebellum, spinal cord, testis, mammary gland, spleen and kidney. Also expressed in fetal brain.

It is found in the nucleus. The protein localises to the nucleoplasm. The protein resides in the nucleus speckle. Functionally, tissue-specific splicing factor with potential implication in the regulation of alternative splicing during neuron and germ cell differentiation. Antagonizes SRSF1-mediated BCL-X splicing. May affect the choice of alternative 5' splice sites by binding to specific sequences in exons and antagonizing the SR protein SRSF1. This Homo sapiens (Human) protein is Splicing regulator RBM11.